The following is a 312-amino-acid chain: Aquaporin-6 (312 aa).

Over 1–50 (MDDKFDDDALPNSKTTAKDYEDKLPEYDYTTTFPNTWMRLREPFREYFAE) the chain is Cytoplasmic. Residues 51–71 (FVGVAVLIIFGVGADCQVVLS) traverse the membrane as a helical segment. At 72–89 (ANTGVASSPKGSYLSLNC) the chain is on the extracellular side. Residues 90 to 110 (GWAIGTAMGVWISGGISGGHI) form a helical membrane-spanning segment. Residues 111-113 (NPA) carry the NPA 1 motif. Topologically, residues 111-128 (NPAVTLAMATWRGFPWWK) are cytoplasmic. A helical membrane pass occupies residues 129-149 (VPGFIFAQLLGGIVGAGLVYV). Over 150-183 (NYIHAIDIVEGGRHIRTLDTAGLFATYAADYMTN) the chain is Extracellular. The N-linked (GlcNAc...) asparagine glycan is linked to Asn183. Residues 184 to 204 (LSCFFSEFLATAVLIIVIHAM) form a helical membrane-spanning segment. Residues 205–213 (NDKRNTPPP) are Cytoplasmic-facing. A helical membrane pass occupies residues 214–234 (AGIVPFVLFFLILGIGASLGM). The Extracellular segment spans residues 235–267 (ETGYAINPARDLGPRMLTAMVGYGRQVFAFRNQ). The NPA 2 motif lies at 241 to 243 (NPA). The helical transmembrane segment at 268 to 288 (YWIWCPVLAPFLGAQVGTIFY) threads the bilayer. Topologically, residues 289-312 (DLFFYKGQDNVFGRLGSHIHISPA) are cytoplasmic.

This sequence belongs to the MIP/aquaporin (TC 1.A.8) family.

The protein localises to the membrane. It carries out the reaction H2O(in) = H2O(out). Water channel required to facilitate the transport of water across membranes. Does not mediate the transport carbon dioxide nor nitric oxide across the membrane. Plays a key role in root water transport of mycorrhizal plant such ectomycorrhizal white spruce or trembling aspen via the hydration at the hyphal-root interphase. Contributes in fungal cellular processes during the basidiocarp formation. The protein is Aquaporin-6 of Laccaria bicolor (Bicoloured deceiver).